Consider the following 867-residue polypeptide: Alanine--tRNA ligase (867 aa).

Residues His-554, His-558, Cys-656, and His-660 each contribute to the Zn(2+) site.

It belongs to the class-II aminoacyl-tRNA synthetase family. Requires Zn(2+) as cofactor.

It localises to the cytoplasm. The catalysed reaction is tRNA(Ala) + L-alanine + ATP = L-alanyl-tRNA(Ala) + AMP + diphosphate. Its function is as follows. Catalyzes the attachment of alanine to tRNA(Ala) in a two-step reaction: alanine is first activated by ATP to form Ala-AMP and then transferred to the acceptor end of tRNA(Ala). Also edits incorrectly charged Ser-tRNA(Ala) and Gly-tRNA(Ala) via its editing domain. In Methylococcus capsulatus (strain ATCC 33009 / NCIMB 11132 / Bath), this protein is Alanine--tRNA ligase.